Here is a 280-residue protein sequence, read N- to C-terminus: 2-dehydro-3-deoxyphosphooctonate aldolase (280 aa).

Belongs to the KdsA family.

The protein resides in the cytoplasm. It carries out the reaction D-arabinose 5-phosphate + phosphoenolpyruvate + H2O = 3-deoxy-alpha-D-manno-2-octulosonate-8-phosphate + phosphate. It functions in the pathway carbohydrate biosynthesis; 3-deoxy-D-manno-octulosonate biosynthesis; 3-deoxy-D-manno-octulosonate from D-ribulose 5-phosphate: step 2/3. The protein operates within bacterial outer membrane biogenesis; lipopolysaccharide biosynthesis. This chain is 2-dehydro-3-deoxyphosphooctonate aldolase, found in Desulfotalea psychrophila (strain LSv54 / DSM 12343).